Reading from the N-terminus, the 172-residue chain is Ribosome maturation factor RimM (172 aa).

Residues 96 to 168 (DGEFYYHEII…RIEVELMEGL (73 aa)) form the PRC barrel domain.

It belongs to the RimM family. In terms of assembly, binds ribosomal protein uS19.

Its subcellular location is the cytoplasm. In terms of biological role, an accessory protein needed during the final step in the assembly of 30S ribosomal subunit, possibly for assembly of the head region. Essential for efficient processing of 16S rRNA. May be needed both before and after RbfA during the maturation of 16S rRNA. It has affinity for free ribosomal 30S subunits but not for 70S ribosomes. The sequence is that of Ribosome maturation factor RimM from Streptococcus thermophilus (strain CNRZ 1066).